The chain runs to 397 residues: Alpha-2B adrenergic receptor (397 aa).

The helical transmembrane segment at 1 to 25 (AIAAIIIFLILFTIFGNALVILAVL) threads the bilayer. Topologically, residues 26–36 (TSRSLRAPQNL) are cytoplasmic. Residues 37 to 62 (FLVSLAAADILVATLIIPFSLANELL) form a helical membrane-spanning segment. Residues 63–72 (GYWYFRRMWC) lie on the Extracellular side of the membrane. Cys72 and Cys151 are joined by a disulfide. A helical membrane pass occupies residues 73–95 (KVYLALDVLFCTSSIVHLCAISL). Residues 96 to 117 (DRYWAVSRALEYNSKRTPRRIK) are Cytoplasmic-facing. The helical transmembrane segment at 118–140 (CIILMVWLIAAVISLPSLVYKGD) threads the bilayer. The Extracellular portion of the chain corresponds to 141–156 (QGPQPSGAPQCNLNQE). The helical transmembrane segment at 157–180 (TWYILASSIGSFFAPCLIMILVYL) threads the bilayer. Residues 181-361 (RIYLIAKRSH…LSREKRFTFV (181 aa)) are Cytoplasmic-facing. Disordered stretches follow at residues 193-212 (GPRAKGAPGKSKFKQSRQVP) and 230-319 (AAGE…LQQP). A compositionally biased stretch (acidic residues) spans 280–300 (SLEEEAEEEEEGEEEREEECE). Low complexity predominate over residues 301–319 (PQALPASPASACSPPLQQP). A helical transmembrane segment spans residues 362–385 (LAVVIGVFVLCWFPFFFSYSLGAI). Topologically, residues 386 to 394 (CPQQCKVPH) are extracellular. Residues 395-397 (DLF) form a helical membrane-spanning segment.

The protein belongs to the G-protein coupled receptor 1 family. Adrenergic receptor subfamily. ADRA2B sub-subfamily. In terms of assembly, interacts with RAB26. Interacts with PPP1R9B.

It is found in the cell membrane. Alpha-2 adrenergic receptors mediate the catecholamine-induced inhibition of adenylate cyclase through the action of G proteins. This chain is Alpha-2B adrenergic receptor (ADRA2B), found in Talpa europaea (European mole).